A 660-amino-acid polypeptide reads, in one-letter code: tRNA 5-methylaminomethyl-2-thiouridine biosynthesis bifunctional protein MnmC (660 aa).

Residues 1–241 (MNDHPAQDAF…KREILRGHLQ (241 aa)) form a tRNA (mnm(5)s(2)U34)-methyltransferase region. Positions 268–660 (IGAGLAGCAT…FLLRKLIRGT (393 aa)) are FAD-dependent cmnm(5)s(2)U34 oxidoreductase.

In the N-terminal section; belongs to the methyltransferase superfamily. tRNA (mnm(5)s(2)U34)-methyltransferase family. This sequence in the C-terminal section; belongs to the DAO family. Requires FAD as cofactor.

It localises to the cytoplasm. The enzyme catalyses 5-aminomethyl-2-thiouridine(34) in tRNA + S-adenosyl-L-methionine = 5-methylaminomethyl-2-thiouridine(34) in tRNA + S-adenosyl-L-homocysteine + H(+). Functionally, catalyzes the last two steps in the biosynthesis of 5-methylaminomethyl-2-thiouridine (mnm(5)s(2)U) at the wobble position (U34) in tRNA. Catalyzes the FAD-dependent demodification of cmnm(5)s(2)U34 to nm(5)s(2)U34, followed by the transfer of a methyl group from S-adenosyl-L-methionine to nm(5)s(2)U34, to form mnm(5)s(2)U34. In Stutzerimonas stutzeri (strain A1501) (Pseudomonas stutzeri), this protein is tRNA 5-methylaminomethyl-2-thiouridine biosynthesis bifunctional protein MnmC.